The sequence spans 340 residues: Tetraacyldisaccharide 4'-kinase (340 aa).

51-58 (HMGGAGKT) provides a ligand contact to ATP.

The protein belongs to the LpxK family.

The catalysed reaction is a lipid A disaccharide + ATP = a lipid IVA + ADP + H(+). Its pathway is glycolipid biosynthesis; lipid IV(A) biosynthesis; lipid IV(A) from (3R)-3-hydroxytetradecanoyl-[acyl-carrier-protein] and UDP-N-acetyl-alpha-D-glucosamine: step 6/6. In terms of biological role, transfers the gamma-phosphate of ATP to the 4'-position of a tetraacyldisaccharide 1-phosphate intermediate (termed DS-1-P) to form tetraacyldisaccharide 1,4'-bis-phosphate (lipid IVA). The polypeptide is Tetraacyldisaccharide 4'-kinase (Rhodopseudomonas palustris (strain TIE-1)).